Reading from the N-terminus, the 2034-residue chain is MWMLAVALLHSISHGILTENFLSHHAFPSLLLSLHFSHPSVFSEDLHASLYFVNASLQEVVFASTTGTLVPCPAAGIPPVTLRWYLATGEEIYDVPGIRHVHPNGTLQIFPFPPSSFNNLIHDNTYYCTAENPSGKIRSQDVHIKAVLREPYTVRVEDQKAMRGNVAVFKCIIPSSVEAYITVVSWEKDTVSLVSGPRFLITSTGALYILDVQNEDGLYNYRCITRHRYTGETRQSNSARLFVSDPANSAPSILDGFDHRKAMAGQRVELPCKASGHPTPKYRWLKDNIPWEPDSRFRQTVTGLLIENTRPSDSGNYVCEVWNNYGTAEMIGRLYVKQPLKATISPRKVKSSVGSQVSLSCSVTGTEDQELSWYRNGEIINPGNNVRITGINRENLIMDGMAKSDGGAYQCFVRKDKMSAQDYVQVILEDGTPKIISAFSEKVVSPGEPVSLMCNVKGTPLPTITWTLDEDPIVKDGSHRISQIITSEGNVVSYLNISNTQVRDGGVYRCTANNSAGVVLYQARINVRGPASIRPMKNITAIAGRDTYIHCRVIGYPYYSIKWYKNSNLLPFNHRQVAFENNGTLKLSDVQKEVDEGEYTCNVLVQPQLSTSQSVHVTVKVPPFIQPFEFPRFSIGQRVFIPCVVVSGDLPITITWQKDGRPIPASLGVTIDNIDFTSSLRISNLSLMHNGNYTCIARNDAAAVEHQSQLIVRVPPRFVVQPSDQDGIYGKAVILNCSAEGYPVPTIVWKYSKGAGVPQFQPIALNGRIQLLTNGSLLIKHVLEEDSGYYLCKVSNDVGADVSKSMYLTVKIPAMITSYPNTTLATQGQKKEMSCTAHGEKPIIVRWEKEDRIINPEMSRYLVSTKEVGDEVISTLQILPTVREDSGFFSCHAINSYGEDRGIIQLTVQEPPDPPEIEIREVRARSIALRWTMGFDGNSPITGYDIECKNKSDSWDSVQRTKDVSPQLNQATIIDLHPSSTYNIRMYAKNRIGKSEASNELTITTDEAAPDGPPQDVQLEPISSQSIRVTWKAPKKHLQNGIIRGYQIGYREYSAGGNFQFNIISIDTTGDSEVYTLNNLKKFTQYGMVVQACNRAGIGPSSQEIITTTLEDVPSCPPGNVQATATSPETISISWSTLAKETLNGILQGFRVIYWANLLDGELGEIRNVTTTQPSLELDGLEKYTNYSIQVLAFTRAGDGVRSEQIFTRTKEDVPGPPAGVKAAASSASTVFVSWLPPLKLNGIIRKYTVFCSHPYPTVISEFEASPDSFSYRIPNLSRNRQYSVWVVAVTAAGRGNSSEIITVEPLAKAPARILTFSGTVTTPWMKDIVLPCKAVGDPAPTVKWMKDSNGTPSLVMIDGRRSIFSNGSFVIRTVKAEDSGYYSCVASNNWGSDEIILNLQVQVPPDQPRLTVSKTTSSSITLSWIPGDNGGSSIRGYILQYSEDNSEQWGSFPISPSERSYRLETLKCGTWYKFTLTAQNGVGPGRISEIIEAKTLGKEPQFSKEQELFASINTTRVRLNLIGWNDGGCPITSFTLEYRPFGTTVWTTAQRTSLSKSYILYDLQEATWYELQMRVCNSAGCAEKQAKFATLNYDGSTIPPLIKSVVQSEEGLATNEGLKMLVTISCILVGVLLLFVMLLIVRRRRREQRLKRLRDAKSLAEMLMSKNTRTSDTLNKQQQTLRMHIDIPRAQLLIEERDTMETIDDRSTVLLTDADFGETSKQKSLTVTHTVHYQSVSQATGPLVDVSDARPGTNPTTRRSAKTGPTARNRYASQWTLNRPHPTISAHTLTTDWRLPTPRPAGSVDKESDSYSVSPSQDTDRARSSMVSTESASSTYEELARAYEHAKMEEQLRHAKFTITECFISDTSSEQLTAGTNDYTDSLTSSTPSESGICRFTASPPKPQDGGRVMNMAVPKAHRPGDLVHLPPYLRMDFLLNRGAQGASRDLGLGQACLEPQKSRTLKRPTVLEPIPMEASSTREAQSWQPGAVATLPQREGAELGQAAKMSSSQESLLDSRGHLKGNNPYAKSYTLV.

A signal peptide spans 1–18; the sequence is MWMLAVALLHSISHGILT. At 19–1621 the chain is on the extracellular side; sequence ENFLSHHAFP…GLATNEGLKM (1603 aa). 9 consecutive Ig-like C2-type domains span residues 39–145, 151–242, 251–321, 339–427, 433–526, 530–618, 622–711, 716–809, and 813–909; these read PSVF…VHIK, PYTV…ARLF, PSIL…VCEV, PLKA…VQVI, PKII…ARIN, PASI…VHVT, PPFI…SQLI, PRFV…MYLT, and PAMI…LTVQ. N-linked (GlcNAc...) asparagine glycans are attached at residues N54 and N104. Intrachain disulfides connect C72–C128, C171–C223, C272–C319, C361–C411, and C454–C510. Residues N496, N513, N538, N582, N684, N692, N736, N774, and N821 are each glycosylated (N-linked (GlcNAc...) asparagine). 2 cysteine pairs are disulfide-bonded: C551/C601 and C643/C695. Residues C737 and C792 are joined by a disulfide bond. A disulfide bridge connects residues C835 and C891. Fibronectin type-III domains follow at residues 911–1008, 1013–1112, 1117–1213, and 1217–1311; these read PPDP…TDEA, PPQD…TLED, PPGN…TKED, and PPAG…AKAP. The N-linked (GlcNAc...) asparagine glycan is linked to N950. N-linked (GlcNAc...) asparagine glycosylation is found at N1168, N1186, N1276, N1297, and N1367. One can recognise an Ig-like C2-type 10 domain in the interval 1311–1403; it reads PARILTFSGT…DEIILNLQVQ (93 aa). The cysteines at positions 1333 and 1385 are disulfide-linked. Fibronectin type-III domains follow at residues 1405 to 1499 and 1500 to 1601; these read PPDQ…TLGK and EPQF…TIPP. N1514 carries N-linked (GlcNAc...) asparagine glycosylation. A helical membrane pass occupies residues 1622–1642; that stretch reads LVTISCILVGVLLLFVMLLIV. Over 1643–2034 the chain is Cytoplasmic; sequence RRRRREQRLK…NPYAKSYTLV (392 aa). Disordered stretches follow at residues 1744–1833, 1882–1908, and 2001–2034; these read LVDV…TESA, DSLT…QDGG, and LGQA…YTLV. Over residues 1882–1891 the composition is skewed to polar residues; it reads DSLTSSTPSE.

As to quaternary structure, homodimer; mediates homophilic interactions to promote cell adhesion. As to expression, SDK1, SDK2, DSCAM and DSCAML1 are expressed in non-overlapping subsets of interneurons and retinal ganglion cells (RGCs) that form synapses in distinct inner plexiform layer (IPL) sublaminae.

The protein resides in the cell membrane. The protein localises to the cell projection. It is found in the axon. It localises to the synapse. Cell adhesion molecule that plays a role in neuronal self-avoidance. Promotes repulsion between specific neuronal processes of either the same cell or the same subtype of cells. Mediates within retinal amacrine and ganglion cell subtypes both isoneuronal self-avoidance for creating an orderly dendritic arborization and heteroneuronal self-avoidance to maintain the mosaic spacing between amacrine and ganglion cell bodies. Receptor for netrin required for axon guidance independently of and in collaboration with the receptor DCC. Adhesion molecule that promotes lamina-specific synaptic connections in the retina: expressed in specific subsets of interneurons and retinal ganglion cells (RGCs) and promotes synaptic connectivity via homophilic interactions. The protein is Cell adhesion molecule DSCAM (DSCAM) of Gallus gallus (Chicken).